The primary structure comprises 1139 residues: GRIP and coiled-coil domain-containing protein (1139 aa).

The segment at 366 to 388 is disordered; it reads NDDSQINNNVSNKVNSPDDDPNT. Over residues 369–380 the composition is skewed to polar residues; it reads SQINNNVSNKVN. 2 coiled-coil regions span residues 472–648 and 758–877; these read VTKL…INNE and LYIL…ETQQ. Positions 1004-1024 are disordered; it reads NEQENDNNNNNNNNNNNNNVE. Residues 1009–1022 show a composition bias toward low complexity; sequence DNNNNNNNNNNNNN. Residues 1043–1084 are a coiled coil; sequence YKKIRKKLETYEILLNEQQEGKKKMTEEINSLKNQVKNYESI. The 52-residue stretch at 1084-1135 folds into the GRIP domain; that stretch reads INGNYQHIIYQKNILSNFIAQIPSRIQVDDYVSVIFNSFNFSNQEIEAINIK.

The chain is GRIP and coiled-coil domain-containing protein from Plasmodium falciparum (isolate 3D7).